Reading from the N-terminus, the 76-residue chain is Omega/kappa-hexatoxin-Ar1g (76 aa).

Residues 1 to 22 (MNTATGFIVLLVLATVLGGIEA) form the signal peptide. Positions 23-35 (GESHMRKDAMGRV) are excised as a propeptide. Disulfide bonds link cysteine 40-cysteine 55, cysteine 47-cysteine 60, and cysteine 54-cysteine 74.

It belongs to the neurotoxin 08 (Shiva) family. 02 (omega/kappa toxin) subfamily. Expressed by the venom gland.

It is found in the secreted. In terms of biological role, toxin that may inhibit ion channels. The polypeptide is Omega/kappa-hexatoxin-Ar1g (Atrax robustus (Sydney funnel-web spider)).